A 445-amino-acid chain; its full sequence is Exodeoxyribonuclease 7 large subunit (445 aa).

Belongs to the XseA family. In terms of assembly, heterooligomer composed of large and small subunits.

It is found in the cytoplasm. The enzyme catalyses Exonucleolytic cleavage in either 5'- to 3'- or 3'- to 5'-direction to yield nucleoside 5'-phosphates.. Its function is as follows. Bidirectionally degrades single-stranded DNA into large acid-insoluble oligonucleotides, which are then degraded further into small acid-soluble oligonucleotides. The protein is Exodeoxyribonuclease 7 large subunit of Delftia acidovorans (strain DSM 14801 / SPH-1).